The sequence spans 206 residues: RNA-binding protein with multiple splicing 2 (206 aa).

At S2 the chain carries N-acetylserine. One can recognise an RRM domain in the interval 25 to 102 (RTLFVSGLPV…QTLRLEFAKA (78 aa)). The segment at 35–45 (DIKPRELYLLF) is important for homodimerization.

As to quaternary structure, homodimer. Interacts with EEF2.

The protein localises to the cytoplasm. Its subcellular location is the nucleus. It is found in the stress granule. Its function is as follows. RNA-binding protein involved in the regulation of smooth muscle cell differentiation and proliferation in the gastrointestinal system. Binds NOG mRNA, the major inhibitor of the bone morphogenetic protein (BMP) pathway. Mediates an increase of NOG mRNA levels, thereby contributing to the negative regulation of BMP signaling pathway and promoting reversible dedifferentiation and proliferation of smooth muscle cells. Acts as a pre-mRNA alternative splicing regulator. Mediates ACTN1 and FLNB alternative splicing. Likely binds to mRNA tandem CAC trinucleotide or CA dinucleotide motifs. The protein is RNA-binding protein with multiple splicing 2 (Rbpms2) of Mus musculus (Mouse).